The primary structure comprises 294 residues: UPF0718 protein YcgR (294 aa).

The next 8 membrane-spanning stretches (helical) occupy residues 15–35 (ISIL…SGII), 54–74 (LAVL…CGII), 92–112 (AFML…YIAF), 117–137 (SVVF…GVIL), 174–194 (IDEF…AAAM), 215–235 (LVMM…AFIA), 247–267 (LIAF…MMLA), and 273–293 (FVFL…LLVK).

The protein belongs to the UPF0718 family.

It localises to the cell membrane. In Bacillus subtilis (strain 168), this protein is UPF0718 protein YcgR (ycgR).